The primary structure comprises 244 residues: 3-deoxy-manno-octulosonate cytidylyltransferase (244 aa).

This sequence belongs to the KdsB family.

It localises to the cytoplasm. The enzyme catalyses 3-deoxy-alpha-D-manno-oct-2-ulosonate + CTP = CMP-3-deoxy-beta-D-manno-octulosonate + diphosphate. It participates in nucleotide-sugar biosynthesis; CMP-3-deoxy-D-manno-octulosonate biosynthesis; CMP-3-deoxy-D-manno-octulosonate from 3-deoxy-D-manno-octulosonate and CTP: step 1/1. It functions in the pathway bacterial outer membrane biogenesis; lipopolysaccharide biosynthesis. Activates KDO (a required 8-carbon sugar) for incorporation into bacterial lipopolysaccharide in Gram-negative bacteria. The sequence is that of 3-deoxy-manno-octulosonate cytidylyltransferase from Ruthia magnifica subsp. Calyptogena magnifica.